A 385-amino-acid chain; its full sequence is S-adenosylmethionine synthase (385 aa).

His-15 is a binding site for ATP. Asp-17 lines the Mg(2+) pocket. Residue Glu-43 participates in K(+) binding. Residues Glu-56 and Gln-99 each contribute to the L-methionine site. Residues 99–109 (QSPDINQGVDR) form a flexible loop region. ATP contacts are provided by residues 164 to 166 (DAK), 230 to 231 (RF), Asp-239, 245 to 246 (RK), Ala-262, and Lys-266. An L-methionine-binding site is contributed by Asp-239. Residue Lys-270 coordinates L-methionine.

This sequence belongs to the AdoMet synthase family. As to quaternary structure, homotetramer; dimer of dimers. Requires Mg(2+) as cofactor. K(+) is required as a cofactor.

The protein localises to the cytoplasm. The enzyme catalyses L-methionine + ATP + H2O = S-adenosyl-L-methionine + phosphate + diphosphate. The protein operates within amino-acid biosynthesis; S-adenosyl-L-methionine biosynthesis; S-adenosyl-L-methionine from L-methionine: step 1/1. Its function is as follows. Catalyzes the formation of S-adenosylmethionine (AdoMet) from methionine and ATP. The overall synthetic reaction is composed of two sequential steps, AdoMet formation and the subsequent tripolyphosphate hydrolysis which occurs prior to release of AdoMet from the enzyme. In Hamiltonella defensa subsp. Acyrthosiphon pisum (strain 5AT), this protein is S-adenosylmethionine synthase.